The following is a 489-amino-acid chain: Rhamnulokinase (489 aa).

ATP is bound at residue 13 to 17; that stretch reads ASSGR. An intrachain disulfide couples Cys-68 to Cys-222. Substrate-binding positions include Gly-83 and 236 to 238; that span reads HDT. Asp-237 acts as the Proton acceptor in catalysis. Residue Thr-259 participates in ATP binding. A substrate-binding site is contributed by Asn-296. ATP is bound at residue Gln-304. Cys-353 and Cys-370 are disulfide-bonded. ATP is bound at residue Gly-402. Cysteines 413 and 417 form a disulfide.

It belongs to the rhamnulokinase family. Mg(2+) is required as a cofactor.

The catalysed reaction is L-rhamnulose + ATP = L-rhamnulose 1-phosphate + ADP + H(+). It functions in the pathway carbohydrate degradation; L-rhamnose degradation; glycerone phosphate from L-rhamnose: step 2/3. In terms of biological role, involved in the catabolism of L-rhamnose (6-deoxy-L-mannose). Catalyzes the transfer of the gamma-phosphate group from ATP to the 1-hydroxyl group of L-rhamnulose to yield L-rhamnulose 1-phosphate. This chain is Rhamnulokinase, found in Salmonella schwarzengrund (strain CVM19633).